The chain runs to 185 residues: Ribose 1,5-bisphosphate phosphokinase PhnN (185 aa).

Belongs to the ribose 1,5-bisphosphokinase family.

The enzyme catalyses alpha-D-ribose 1,5-bisphosphate + ATP = 5-phospho-alpha-D-ribose 1-diphosphate + ADP. The protein operates within metabolic intermediate biosynthesis; 5-phospho-alpha-D-ribose 1-diphosphate biosynthesis; 5-phospho-alpha-D-ribose 1-diphosphate from D-ribose 5-phosphate (route II): step 3/3. Functionally, catalyzes the phosphorylation of ribose 1,5-bisphosphate to 5-phospho-D-ribosyl alpha-1-diphosphate (PRPP). The chain is Ribose 1,5-bisphosphate phosphokinase PhnN from Escherichia coli (strain SMS-3-5 / SECEC).